The primary structure comprises 512 residues: ATP synthase subunit alpha (512 aa).

Residue 169–176 (GDRQTGKT) participates in ATP binding.

Belongs to the ATPase alpha/beta chains family. As to quaternary structure, F-type ATPases have 2 components, CF(1) - the catalytic core - and CF(0) - the membrane proton channel. CF(1) has five subunits: alpha(3), beta(3), gamma(1), delta(1), epsilon(1). CF(0) has three main subunits: a(1), b(2) and c(9-12). The alpha and beta chains form an alternating ring which encloses part of the gamma chain. CF(1) is attached to CF(0) by a central stalk formed by the gamma and epsilon chains, while a peripheral stalk is formed by the delta and b chains.

The protein resides in the cell inner membrane. The enzyme catalyses ATP + H2O + 4 H(+)(in) = ADP + phosphate + 5 H(+)(out). Produces ATP from ADP in the presence of a proton gradient across the membrane. The alpha chain is a regulatory subunit. The polypeptide is ATP synthase subunit alpha (Orientia tsutsugamushi (strain Ikeda) (Rickettsia tsutsugamushi)).